Here is a 179-residue protein sequence, read N- to C-terminus: Isopentenyl-diphosphate Delta-isomerase (179 aa).

Mn(2+) contacts are provided by H24 and H30. A Nudix hydrolase domain is found at L28 to T160. C65 is a catalytic residue. H67 contributes to the Mn(2+) binding site. E85 is a Mg(2+) binding site. The Mn(2+) site is built by E110 and E112. E112 is an active-site residue.

This sequence belongs to the IPP isomerase type 1 family. As to quaternary structure, homodimer. Mg(2+) serves as cofactor. It depends on Mn(2+) as a cofactor.

The protein resides in the cytoplasm. The catalysed reaction is isopentenyl diphosphate = dimethylallyl diphosphate. It functions in the pathway isoprenoid biosynthesis; dimethylallyl diphosphate biosynthesis; dimethylallyl diphosphate from isopentenyl diphosphate: step 1/1. Its function is as follows. Catalyzes the 1,3-allylic rearrangement of the homoallylic substrate isopentenyl (IPP) to its highly electrophilic allylic isomer, dimethylallyl diphosphate (DMAPP). This is Isopentenyl-diphosphate Delta-isomerase from Serratia proteamaculans (strain 568).